A 441-amino-acid polypeptide reads, in one-letter code: Baicalein 7-O-glucuronosyltransferase (441 aa).

The protein belongs to the UDP-glycosyltransferase family. Homodimer.

The enzyme catalyses baicalein + UDP-alpha-D-glucuronate = baicalin + UDP. Inhibited by copper, zinc and iron, p-Chloromercuri-benzoic acid (PCMBA) and 4,4'-diisothiocyanostilbene-2,2'-disulfonic acid (DIDS), but not by N-ethylmaleimide (NEM), dithioerythritol (DTE), calcium or magnesium. Involved in the production of glucuronosylated baicalein, a flavonoid that shows antiallergic, anti-HIV and antitumor activities. Can use baicalein, scutellarein and wogonin as substrates, but not chrysin, apigenin, luteolin, quercetin, formononetin and daidzein. Highly specific for UDP-glucuronate (UDP-GlcUA) and no activity with UDP-glucose or UDP-galacturonic acid. The protein is Baicalein 7-O-glucuronosyltransferase (UBGAT-I) of Scutellaria baicalensis (Baical skullcap).